We begin with the raw amino-acid sequence, 41 residues long: SPbeta prophage-derived uncharacterized protein YosF (41 aa).

This is SPbeta prophage-derived uncharacterized protein YosF (yosF) from Bacillus subtilis (strain 168).